The chain runs to 940 residues: MASPPSSGQPRPPPPPPPPARLLLPLLLSLLLSLAPGAWGWARGAPRPPPSSPPLSIMGLMPLTKEVAKGSIGRGVLPAVELAIEQIRNESLLRPYFLDLRLYDTECDNAKGLKAFYDAIKYGPNHLMVFGGVCPSVTSIIAESLQGWNLVQLSFAATTPVLADKKKYPYFFRTVPSDNAVNPAILKLLKHFRWRRVGTLTQDVQRFSEVRNDLTGVLYGEDIEISDTESFSNDPCTSVKKLKGNDVRIILGQFDQNMAAKVFCCAFEESMFGSKYQWIIPGWYEPAWWEQVHVEANSSRCLRRSLLAAMEGYIGVDFEPLSSKQIKTISGKTPQQYEREYNSKRSGVGPSKFHGYAYDGIWVIAKTLQRAMETLHASSRHQRIQDFNYTDHTLGRIILNAMNETNFFGVTGQVVFRNGERMGTIKFTQFQDSREVKVGEYNAVADTLEIINDTIRFQGSEPPKDKTIILEQLRKISLPLYSILSALTILGMIMASAFLFFNIKNRNQKLIKMSSPYMNNLIILGGMLSYASIFLFGLDGSFVSEKTFETLCTVRTWILTVGYTTAFGAMFAKTWRVHAIFKNVKMKKKIIKDQKLLVIVGGMLLIDLCILICWQAVDPLRRTVERYSMEPDPAGRDISIRPLLEHCENTHMTIWLGIVYAYKGLLMLFGCFLAWETRNVSIPALNDSKYIGMSVYNVGIMCIIGAAVSFLTRDQPNVQFCIVALVIIFCSTITLCLVFVPKLITLRTNPDAATQNRRFQFTQNQKKEDSKTSTSVTSVNQASTSRLEGLQSENHRLRMKITELDKDLEEVTMQLQDTPEKTTYIKQNHYQELNDILSLGNFTESTDGGKAILKNHLDQNPQLQWNTTEPSRTCKDPIEDINSPEHIQRRLSLQLPILHHAYLPSIGGVDASCVSPCVSPTASPRHRHVPPSFRVMVSGL.

The N-terminal stretch at M1 to G40 is a signal peptide. The Extracellular segment spans residues W41–S482. N89 is a glycosylation site (N-linked (GlcNAc...) asparagine). Intrachain disulfides connect C107-C134, C236-C265, and C264-C301. N297, N388, N403, and N452 each carry an N-linked (GlcNAc...) asparagine glycan. Residues I483–I503 traverse the membrane as a helical segment. At K504–L521 the chain is on the cytoplasmic side. A helical membrane pass occupies residues I522–F542. Residues V543 to T550 are Extracellular-facing. A helical transmembrane segment spans residues L551–F571. The Cytoplasmic portion of the chain corresponds to A572–L596. A helical membrane pass occupies residues L597–V617. Over D618–T653 the chain is Extracellular. Residues I654–A674 traverse the membrane as a helical segment. Residues W675–Y690 are Cytoplasmic-facing. The chain crosses the membrane as a helical span at residues I691–L711. Over T712–Q719 the chain is Extracellular. The helical transmembrane segment at F720 to V740 threads the bilayer. Residues P741 to L940 are Cytoplasmic-facing. A disordered region spans residues T762 to G789. Polar residues predominate over residues T772–R786. 2 positions are modified to phosphoserine: S775 and S778. A coiled-coil region spans residues Q781–T818. T818 is subject to Phosphothreonine. Phosphoserine occurs at positions 883, 892, 912, 915, 919, and 923.

Belongs to the G-protein coupled receptor 3 family. GABA-B receptor subfamily. In terms of assembly, heterodimer of GABBR1 and GABBR2. Homodimers may form, but are inactive. Interacts (via C-terminus) with ATF4 (via leucine zipper domain).

It localises to the cell membrane. Its subcellular location is the postsynaptic cell membrane. Functionally, component of a heterodimeric G-protein coupled receptor for GABA, formed by GABBR1 and GABBR2. Within the heterodimeric GABA receptor, only GABBR1 seems to bind agonists, while GABBR2 mediates coupling to G proteins. Ligand binding causes a conformation change that triggers signaling via guanine nucleotide-binding proteins (G proteins) and modulates the activity of down-stream effectors, such as adenylate cyclase. Signaling inhibits adenylate cyclase, stimulates phospholipase A2, activates potassium channels, inactivates voltage-dependent calcium-channels and modulates inositol phospholipid hydrolysis. Plays a critical role in the fine-tuning of inhibitory synaptic transmission. Pre-synaptic GABA receptor inhibits neurotransmitter release by down-regulating high-voltage activated calcium channels, whereas postsynaptic GABA receptor decreases neuronal excitability by activating a prominent inwardly rectifying potassium (Kir) conductance that underlies the late inhibitory postsynaptic potentials. Not only implicated in synaptic inhibition but also in hippocampal long-term potentiation, slow wave sleep, muscle relaxation and antinociception. Interacts with KCTD8, KCTD12 and KCTD16; this interaction determines the pharmacology and kinetics of the receptor response, the KCTD proteins markedly accelerating the GABA-B response, although to different extents. The chain is Gamma-aminobutyric acid type B receptor subunit 2 (Gabbr2) from Mus musculus (Mouse).